A 349-amino-acid polypeptide reads, in one-letter code: UDP-N-acetylenolpyruvoylglucosamine reductase (349 aa).

An FAD-binding PCMH-type domain is found at 25–197; the sequence is GIAATARYAA…VAVTFRLPKR (173 aa). Residue arginine 173 is part of the active site. The active-site Proton donor is serine 249. Glutamate 345 is an active-site residue.

This sequence belongs to the MurB family. The cofactor is FAD.

The protein resides in the cytoplasm. It carries out the reaction UDP-N-acetyl-alpha-D-muramate + NADP(+) = UDP-N-acetyl-3-O-(1-carboxyvinyl)-alpha-D-glucosamine + NADPH + H(+). It participates in cell wall biogenesis; peptidoglycan biosynthesis. Cell wall formation. This is UDP-N-acetylenolpyruvoylglucosamine reductase from Burkholderia vietnamiensis (strain G4 / LMG 22486) (Burkholderia cepacia (strain R1808)).